A 332-amino-acid polypeptide reads, in one-letter code: Aspartate carbamoyltransferase catalytic subunit (332 aa).

Arg54 and Thr55 together coordinate carbamoyl phosphate. Lys82 lines the L-aspartate pocket. Carbamoyl phosphate is bound by residues Arg104, His134, and Gln137. Arg175 and Arg230 together coordinate L-aspartate. 2 residues coordinate carbamoyl phosphate: Gly271 and Pro272. The tract at residues 312–332 is disordered; the sequence is GGPDGDSTTSPGSGPEGGTTP.

The protein belongs to the aspartate/ornithine carbamoyltransferase superfamily. ATCase family. Heterododecamer (2C3:3R2) of six catalytic PyrB chains organized as two trimers (C3), and six regulatory PyrI chains organized as three dimers (R2).

It catalyses the reaction carbamoyl phosphate + L-aspartate = N-carbamoyl-L-aspartate + phosphate + H(+). It functions in the pathway pyrimidine metabolism; UMP biosynthesis via de novo pathway; (S)-dihydroorotate from bicarbonate: step 2/3. In terms of biological role, catalyzes the condensation of carbamoyl phosphate and aspartate to form carbamoyl aspartate and inorganic phosphate, the committed step in the de novo pyrimidine nucleotide biosynthesis pathway. The chain is Aspartate carbamoyltransferase catalytic subunit from Beutenbergia cavernae (strain ATCC BAA-8 / DSM 12333 / CCUG 43141 / JCM 11478 / NBRC 16432 / NCIMB 13614 / HKI 0122).